A 148-amino-acid chain; its full sequence is Ferredoxin-thioredoxin reductase catalytic chain, chloroplastic (148 aa).

The transit peptide at 1-35 (MKALQASTSYSFFSKSSSATLQRRTHRPQCVILSK) directs the protein to the chloroplast. Residue Cys87 participates in [4Fe-4S] cluster binding. Cys89 functions as the Nucleophile in the catalytic mechanism. The cysteines at positions 89 and 119 are disulfide-linked. Residues Cys106, Cys108, and Cys117 each coordinate [4Fe-4S] cluster.

This sequence belongs to the ferredoxin thioredoxin reductase beta subunit family. Heterodimer of subunit A (variable subunit) and subunit B (catalytic subunit). Heterodimeric FTR forms a complex with ferredoxin and thioredoxin. [4Fe-4S] cluster is required as a cofactor.

It localises to the plastid. It is found in the chloroplast. The catalysed reaction is [thioredoxin]-disulfide + 2 reduced [2Fe-2S]-[ferredoxin] + 2 H(+) = [thioredoxin]-dithiol + 2 oxidized [2Fe-2S]-[ferredoxin]. In terms of biological role, catalytic subunit of the ferredoxin-thioredoxin reductase (FTR), which catalyzes the two-electron reduction of thioredoxins by the electrons provided by reduced ferredoxin. The sequence is that of Ferredoxin-thioredoxin reductase catalytic chain, chloroplastic from Spinacia oleracea (Spinach).